The primary structure comprises 192 residues: Rhomboid protease GlpG (192 aa).

Over 1–10 (MKNFLAQQGK) the chain is Cytoplasmic. A helical transmembrane segment spans residues 11 to 31 (ITLILTALCVLIYLAQQLGFE). Topologically, residues 32 to 57 (DDIMYLMHYPAYEEQDSEVWRYISHT) are periplasmic. The chain crosses the membrane as a helical span at residues 58–78 (LVHLSNLHILFNLSWFFIFGG). At 79–82 (MIER) the chain is on the cytoplasmic side. The chain crosses the membrane as a helical span at residues 83-103 (TFGSVKLLMLYVVASAITGYV). Residues 104 to 107 (QNYV) are Periplasmic-facing. The helical transmembrane segment at 108–128 (SGPAFFGLSGVVYAVLGYVFI) threads the bilayer. Ser116 functions as the Nucleophile in the catalytic mechanism. Over 129-141 (RDKLNHHLFDLPE) the chain is Cytoplasmic. A helical transmembrane segment spans residues 142–162 (GFFTMLLVGIALGFISPLFGV). A topological domain (periplasmic) is located at residue Glu163. A helical transmembrane segment spans residues 164 to 184 (MGNAAHISGLIVGLIWGFIDS). His169 is a catalytic residue. Residues 185 to 192 (KLRKNSLE) are Cytoplasmic-facing.

This sequence belongs to the peptidase S54 family.

The protein resides in the cell inner membrane. The catalysed reaction is Cleaves type-1 transmembrane domains using a catalytic dyad composed of serine and histidine that are contributed by different transmembrane domains.. In terms of biological role, rhomboid-type serine protease that catalyzes intramembrane proteolysis. In Haemophilus influenzae (strain ATCC 51907 / DSM 11121 / KW20 / Rd), this protein is Rhomboid protease GlpG (glpG).